The chain runs to 259 residues: Thiazole synthase (259 aa).

The Schiff-base intermediate with DXP role is filled by K95. Residues G156, 182-183 (AG), and 204-205 (NT) each bind 1-deoxy-D-xylulose 5-phosphate.

The protein belongs to the ThiG family. As to quaternary structure, homotetramer. Forms heterodimers with either ThiH or ThiS.

It is found in the cytoplasm. The catalysed reaction is [ThiS sulfur-carrier protein]-C-terminal-Gly-aminoethanethioate + 2-iminoacetate + 1-deoxy-D-xylulose 5-phosphate = [ThiS sulfur-carrier protein]-C-terminal Gly-Gly + 2-[(2R,5Z)-2-carboxy-4-methylthiazol-5(2H)-ylidene]ethyl phosphate + 2 H2O + H(+). It functions in the pathway cofactor biosynthesis; thiamine diphosphate biosynthesis. In terms of biological role, catalyzes the rearrangement of 1-deoxy-D-xylulose 5-phosphate (DXP) to produce the thiazole phosphate moiety of thiamine. Sulfur is provided by the thiocarboxylate moiety of the carrier protein ThiS. In vitro, sulfur can be provided by H(2)S. This chain is Thiazole synthase, found in Baumannia cicadellinicola subsp. Homalodisca coagulata.